Reading from the N-terminus, the 88-residue chain is Small ribosomal subunit protein bS20 (88 aa).

This sequence belongs to the bacterial ribosomal protein bS20 family.

In terms of biological role, binds directly to 16S ribosomal RNA. In Clostridium novyi (strain NT), this protein is Small ribosomal subunit protein bS20.